Here is a 208-residue protein sequence, read N- to C-terminus: Thiamine-phosphate synthase (208 aa).

Residues 37 to 39 and Asn70 each bind 4-amino-2-methyl-5-(diphosphooxymethyl)pyrimidine; that span reads QVR. Residues Asp71 and Asp90 each contribute to the Mg(2+) site. Thr109 contributes to the 4-amino-2-methyl-5-(diphosphooxymethyl)pyrimidine binding site. 135 to 137 serves as a coordination point for 2-[(2R,5Z)-2-carboxy-4-methylthiazol-5(2H)-ylidene]ethyl phosphate; sequence TTS. Lys138 contacts 4-amino-2-methyl-5-(diphosphooxymethyl)pyrimidine. Ala166 is a binding site for 2-[(2R,5Z)-2-carboxy-4-methylthiazol-5(2H)-ylidene]ethyl phosphate.

It belongs to the thiamine-phosphate synthase family. Mg(2+) serves as cofactor.

It carries out the reaction 2-[(2R,5Z)-2-carboxy-4-methylthiazol-5(2H)-ylidene]ethyl phosphate + 4-amino-2-methyl-5-(diphosphooxymethyl)pyrimidine + 2 H(+) = thiamine phosphate + CO2 + diphosphate. It catalyses the reaction 2-(2-carboxy-4-methylthiazol-5-yl)ethyl phosphate + 4-amino-2-methyl-5-(diphosphooxymethyl)pyrimidine + 2 H(+) = thiamine phosphate + CO2 + diphosphate. The catalysed reaction is 4-methyl-5-(2-phosphooxyethyl)-thiazole + 4-amino-2-methyl-5-(diphosphooxymethyl)pyrimidine + H(+) = thiamine phosphate + diphosphate. It functions in the pathway cofactor biosynthesis; thiamine diphosphate biosynthesis; thiamine phosphate from 4-amino-2-methyl-5-diphosphomethylpyrimidine and 4-methyl-5-(2-phosphoethyl)-thiazole: step 1/1. Functionally, condenses 4-methyl-5-(beta-hydroxyethyl)thiazole monophosphate (THZ-P) and 2-methyl-4-amino-5-hydroxymethyl pyrimidine pyrophosphate (HMP-PP) to form thiamine monophosphate (TMP). The protein is Thiamine-phosphate synthase of Salinispora tropica (strain ATCC BAA-916 / DSM 44818 / JCM 13857 / NBRC 105044 / CNB-440).